We begin with the raw amino-acid sequence, 125 residues long: UPF0251 protein Dhaf_1981 (125 aa).

Belongs to the UPF0251 family.

This is UPF0251 protein Dhaf_1981 from Desulfitobacterium hafniense (strain DSM 10664 / DCB-2).